Here is a 114-residue protein sequence, read N- to C-terminus: uncharacterized protein (114 aa).

Helical transmembrane passes span 14-34 and 75-95; these read VMSAIFKWLLLYSLPALCFLL and VIIILVPCWWHAVIVTQHPVA.

It is found in the membrane. This is an uncharacterized protein from Homo sapiens (Human).